We begin with the raw amino-acid sequence, 200 residues long: Ribosome maturation factor RimP (200 aa).

Belongs to the RimP family.

The protein localises to the cytoplasm. Required for maturation of 30S ribosomal subunits. This chain is Ribosome maturation factor RimP, found in Polaromonas sp. (strain JS666 / ATCC BAA-500).